Consider the following 229-residue polypeptide: Potassium/proton antiporter CemA (229 aa).

A run of 3 helical transmembrane segments spans residues alanine 6–cysteine 26, isoleucine 107–glycine 127, and isoleucine 189–isoleucine 209.

It belongs to the CemA family.

The protein resides in the plastid. It localises to the chloroplast inner membrane. It carries out the reaction K(+)(in) + H(+)(out) = K(+)(out) + H(+)(in). Contributes to K(+)/H(+) antiport activity by supporting proton efflux to control proton extrusion and homeostasis in chloroplasts in a light-dependent manner to modulate photosynthesis. Prevents excessive induction of non-photochemical quenching (NPQ) under continuous-light conditions. Indirectly promotes efficient inorganic carbon uptake into chloroplasts. The polypeptide is Potassium/proton antiporter CemA (Draba nemorosa (Woodland whitlowgrass)).